Consider the following 332-residue polypeptide: Fructose-1,6-bisphosphatase class 1 (332 aa).

The Mg(2+) site is built by Glu-89, Asp-110, Leu-112, and Asp-113. Substrate contacts are provided by residues Asp-113–Ser-116, Asn-206, Tyr-239, Tyr-257–Tyr-259, and Lys-269. Glu-275 contributes to the Mg(2+) binding site.

Belongs to the FBPase class 1 family. Homotetramer. Mg(2+) serves as cofactor.

The protein resides in the cytoplasm. It carries out the reaction beta-D-fructose 1,6-bisphosphate + H2O = beta-D-fructose 6-phosphate + phosphate. The protein operates within carbohydrate biosynthesis; gluconeogenesis. This chain is Fructose-1,6-bisphosphatase class 1, found in Erwinia tasmaniensis (strain DSM 17950 / CFBP 7177 / CIP 109463 / NCPPB 4357 / Et1/99).